Here is a 568-residue protein sequence, read N- to C-terminus: PWWP domain-containing protein2 (568 aa).

The span at 1 to 19 shows a compositional bias: basic and acidic residues; it reads MTEIKDSSVKDENPGKQEE. 3 disordered regions span residues 1–126, 213–340, and 465–568; these read MTEI…YKPG, QSTP…DVAK, and IASL…TGQK. Positions 29 to 46 are enriched in polar residues; sequence MSTATNNSKNIETTSSNG. Composition is skewed to basic and acidic residues over residues 48-88 and 100-122; these read EDIK…KTIE and KSQKSEKSNGNARKETKQSERVN. A PWWP domain is found at 125–189; that stretch reads PGMRVLTKMS…SDSLTPLTSE (65 aa). A compositionally biased stretch (low complexity) spans 214–228; sequence STPDLDSLSVPSSES. Acidic residues predominate over residues 229–249; that stretch reads EVSEEESDQEMSEPSPIEEDY. The segment covering 255 to 266 has biased composition (basic residues); it reads RRITRKGTKKKT. Polar residues predominate over residues 281 to 292; it reads LNASSNVSSNPA. Residues 325 to 336 are compositionally biased toward acidic residues; the sequence is KEEEEGSVANEE. Composition is skewed to basic and acidic residues over residues 489 to 500 and 514 to 541; these read KQNEDNEDKVKA and DASKDMISEEKSSKDADNSLEVAGKDFA.

In Schizosaccharomyces pombe (strain 972 / ATCC 24843) (Fission yeast), this protein is PWWP domain-containing protein2 (pdp2).